Reading from the N-terminus, the 598-residue chain is Elongation factor 4 (598 aa).

Positions 2–184 (KNIRNFSIIA…EIVRCIPPPV (183 aa)) constitute a tr-type G domain. Residues 14 to 19 (DHGKST) and 131 to 134 (NKID) contribute to the GTP site.

The protein belongs to the TRAFAC class translation factor GTPase superfamily. Classic translation factor GTPase family. LepA subfamily.

The protein resides in the cell inner membrane. The enzyme catalyses GTP + H2O = GDP + phosphate + H(+). Functionally, required for accurate and efficient protein synthesis under certain stress conditions. May act as a fidelity factor of the translation reaction, by catalyzing a one-codon backward translocation of tRNAs on improperly translocated ribosomes. Back-translocation proceeds from a post-translocation (POST) complex to a pre-translocation (PRE) complex, thus giving elongation factor G a second chance to translocate the tRNAs correctly. Binds to ribosomes in a GTP-dependent manner. This is Elongation factor 4 from Psychromonas ingrahamii (strain DSM 17664 / CCUG 51855 / 37).